A 428-amino-acid chain; its full sequence is Immunoglobulin superfamily containing leucine-rich repeat protein (428 aa).

A signal peptide spans Met-1–Ala-18. The 32-residue stretch at Cys-19–Ala-50 folds into the LRRNT domain. Asn-51 carries an N-linked (GlcNAc...) asparagine glycan. LRR repeat units lie at residues Asn-51 to Glu-72, Leu-75 to Ser-96, His-99 to Ser-122, Ala-123 to Ser-144, and Ala-147 to Pro-168. Positions Asn-180 to Ala-231 constitute an LRRCT domain. Positions Pro-232 to Ala-343 constitute an Ig-like domain. Cysteines 257 and 327 form a disulfide. Asn-309 carries N-linked (GlcNAc...) asparagine glycosylation.

In terms of tissue distribution, expressed in various tissues including retina, heart, skeletal muscle, prostate, ovary, small intestine, thyroid, adrenal cortex, testis, stomach and spinal cord.

Its subcellular location is the secreted. This chain is Immunoglobulin superfamily containing leucine-rich repeat protein (ISLR), found in Homo sapiens (Human).